Here is a 309-residue protein sequence, read N- to C-terminus: Putative glycosyltransferase 48 (309 aa).

This sequence belongs to the glycosyltransferase group 1 family. Glycosyltransferase 4 subfamily.

In Saccharolobus islandicus (Sulfolobus islandicus), this protein is Putative glycosyltransferase 48 (SIFV0048).